The following is a 253-amino-acid chain: MMTVLEDMLRKTRNGKVHMTLIDPGAKPPQECARIAEEAEMAGTDFIMVGGSTDIDSRAMDEAISAIKAKTDLKVIIFPGSSLMISPKADAIFFMSLLNSGSLEYVVGHQVKAAIPLSAMKIEKIPMAYLVFDPGMTVGRVGKAHLIPRDDEKTALSYALAAQYFGFRLVYFEAGSGSPYHVGENVVRRVKQELDIPVIVGGGIRTPEAAKALAQAGADMIVTGTIAERSVNVYEALHPIVESIKEVGISKIQ.

Residues aspartate 23 and serine 52 each coordinate Mg(2+). Residues 171 to 177 (YFEAGSG), 202 to 203 (GG), and 224 to 225 (GT) contribute to the sn-glycerol 1-phosphate site.

It belongs to the GGGP/HepGP synthase family. Group II subfamily. Homodimer. The cofactor is Mg(2+).

The protein localises to the cytoplasm. The catalysed reaction is sn-glycerol 1-phosphate + (2E,6E,10E)-geranylgeranyl diphosphate = sn-3-O-(geranylgeranyl)glycerol 1-phosphate + diphosphate. It participates in membrane lipid metabolism; glycerophospholipid metabolism. Its activity is regulated as follows. Inhibited by high concentrations of magnesium (&gt;10 mM) and by EDTA in vitro. Functionally, prenyltransferase that catalyzes the transfer of the geranylgeranyl moiety of geranylgeranyl diphosphate (GGPP) to the C3 hydroxyl of sn-glycerol-1-phosphate (G1P). This reaction is the first ether-bond-formation step in the biosynthesis of archaeal membrane lipids. Cannot use sn-glycerol-3-phosphate (G3P) as substrate. This chain is Geranylgeranylglyceryl phosphate synthase, found in Thermoplasma acidophilum (strain ATCC 25905 / DSM 1728 / JCM 9062 / NBRC 15155 / AMRC-C165).